Here is a 123-residue protein sequence, read N- to C-terminus: uncharacterized protein (123 aa).

Residues P34–E123 form a disordered region. 3 stretches are compositionally biased toward basic and acidic residues: residues K50–P60, T74–Q100, and E107–E123.

Its subcellular location is the mitochondrion. This is an uncharacterized protein from Schizosaccharomyces pombe (strain 972 / ATCC 24843) (Fission yeast).